The following is a 1382-amino-acid chain: MKAPTALAPGILLLLLTLAQRSHGECKEALVKSEMNVNMKYQLPNFTAETPIHNVVLPGHHIYLGATNYIYVLNDKDLQKVSEFKTGPVVEHPDCFPCQDCSSKANVSGGVWKDNVNMALLVDTYYDDQLISCGSVNRGTCQRHVLPPDNAADIQSEVHCMFSPLAEEESGQCPDCVVSALGAKVLLSEKDRFINFFVGNTINSSYPPDYSLHSISVRRLKETQDGFKFLTDQSYIDVLPEFRDSYPIKYIHAFESNHFIYFLTVQKETLDAQTFHTRIIRFCSVDSGLHSYMEMPLECILTEKRRKRSTREEVFNILQAAYVSKPGANLAKQIGASPYDDILYGVFAQSKPDSAEPMNRSAVCAFPIKYVNDFFNKIVNKNNVRCLQHFYGPNHEHCFNRTLLRNSSGCEVRSDEYRTEFTTALQRVDLFMGRLNHVLLTSISTFIKGDLTIANLGTSEGRFMQVVLSRTAHFTPHVNFLLDSYPVSPEVIVEHPSNQNGYTLVVTGKKITKIPLNGLGCGHFQSCSQCLSPPYFIQCGWCHNRCVHSNECPSGTWTQEICLPAVYKVFPTSAPLEGGTMLTICGWDFGFKKNNKFDLRKTKVLLGNESCTLTLSESTTNTLKCTVGPAMSEHFNVSVIVSNSRETTQYSAFSYVDPVITSISPRYGPHAGGTLLTLTGKYLNSGNSRHISIGGKTCTLKSVSDSILECYTPGHTVSAEFPVKLKIDLADRVTSSFSYREDPVVSEIHPTKSFISGGSTITGIGKNLNSVSTPKLVIEVHDVGVNYTVACQHRSSSEIICCTTPSLRQLDLQLPLKTKAFFLLDGILSKHFDLTYVHDPMFKPFEKPVMISMGNENVVEIKGDDIDPEAVKGEVLKVGNKSCENLHWHSEALLCTVPSDLLKLNGGELNIEWKQAVSSTVLGKVIVQPDQNFAGLIIGAVSISVVVLLVSGLFLWLRKRKHKDLGSELVRYDARVHTPHLDRLVSARSVSPTTEMVSNESVDYRATFPEDQFPNSSQNGACRQVQYLLTDLSPILTSGDSDISSPLLQNTVHIDLSALNPELVQAVPHVVIGPSSLIVHFNEVIGRGHFGCVYHGTLLDSDGKKIHCAVKSLNRITDIEEVSQFLTEGIIMKDFSHPNVLSLLGICLRSEGSPLVVLPYMKHGDLRNFIRNETHNPTVKDLIGFGLQVAKGMKYLVSKKFVHRDLAARNCMLDEKFTVKVADFGLARDMYDKEYYSVHNKTGAKLPVKWMALESLQTQKFTTKSDVWSFGVLLWELMTRGAPPYPDVNTFDITIYLLQGRRLLQPEYCPDALYEVMLKCWHPKAEMRPSVSELVSRISSIFSTFIGEHYVHVNATYVNVKCVAPYPSLLPSQDNIDGEANT.

Residues 1 to 24 (MKAPTALAPGILLLLLTLAQRSHG) form the signal peptide. The Extracellular portion of the chain corresponds to 25-935 (ECKEALVKSE…IVQPDQNFAG (911 aa)). The Sema domain occupies 27-516 (KEALVKSEMN…TGKKITKIPL (490 aa)). An N-linked (GlcNAc...) asparagine glycan is attached at Asn45. 4 disulfides stabilise this stretch: Cys95/Cys101, Cys98/Cys160, Cys133/Cys141, and Cys173/Cys176. N-linked (GlcNAc...) asparagine glycosylation occurs at Asn106. 2 N-linked (GlcNAc...) asparagine glycosylation sites follow: Asn203 and Asn359. 2 disulfides stabilise this stretch: Cys299-Cys364 and Cys386-Cys398. N-linked (GlcNAc...) asparagine glycosylation is found at Asn400 and Asn406. Intrachain disulfides connect Cys521-Cys539, Cys527-Cys562, Cys530-Cys546, and Cys542-Cys552. IPT/TIG domains lie at 564–656 (PAVY…FSYV), 658–740 (PVIT…FSYR), and 743–837 (PVVS…LTYV). Thr583 carries an O-linked (Man) threonine glycan. N-linked (GlcNAc...) asparagine glycosylation is found at Asn608 and Asn636. O-linked (Man) threonine glycosylation is found at Thr677 and Thr762. Residues Asn786 and Asn880 are each glycosylated (N-linked (GlcNAc...) asparagine). The helical transmembrane segment at 936–956 (LIIGAVSISVVVLLVSGLFLW) threads the bilayer. Residues 957 to 1379 (LRKRKHKDLG…LPSQDNIDGE (423 aa)) lie on the Cytoplasmic side of the membrane. Ser967 is subject to Phosphoserine. Thr978 carries the post-translational modification Phosphothreonine. Phosphoserine is present on residues Ser991, Ser998, and Ser1001. Tyr1004 is subject to Phosphotyrosine. Residues 1079–1346 (VHFNEVIGRG…RISSIFSTFI (268 aa)) enclose the Protein kinase domain. ATP-binding positions include 1085–1093 (IGRGHFGCV) and Lys1111. Asp1205 acts as the Proton acceptor in catalysis. The tract at residues 1213–1382 (LDEKFTVKVA…QDNIDGEANT (170 aa)) is interaction with RANBP9. At Tyr1231 the chain carries Phosphotyrosine. Phosphotyrosine; by autocatalysis is present on residues Tyr1235 and Tyr1236. Thr1290 bears the Phosphothreonine mark. Residues 1321–1360 (WHPKAEMRPSVSELVSRISSIFSTFIGEHYVHVNATYVNV) form an interaction with MUC20 region. Tyr1350 and Tyr1357 each carry phosphotyrosine; by autocatalysis. Position 1366 is a phosphotyrosine (Tyr1366).

This sequence belongs to the protein kinase superfamily. Tyr protein kinase family. As to quaternary structure, heterodimer made of an alpha chain (50 kDa) and a beta chain (145 kDa) which are disulfide linked. Binds PLXNB1. Interacts when phosphorylated with downstream effectors including STAT3, PIK3R1, SRC, PCLG1, GRB2 and GAB1. Interacts with SPSB1, SPSB2 and SPSB4. Interacts with INPP5D/SHIP1. When phosphorylated at Tyr-1357, interacts with INPPL1/SHIP2. Interacts with RANBP9 and RANBP10, as well as SPSB1, SPSB2, SPSB3 and SPSB4. SPSB1 binding occurs in the presence and in the absence of HGF, however HGF treatment has a positive effect on this interaction. Interacts with MUC20; prevents interaction with GRB2 and suppresses hepatocyte growth factor-induced cell proliferation. Interacts with GRB10. Interacts with PTPN1 and PTPN2. Interacts with HSP90AA1 and HSP90AB1; the interaction suppresses MET kinase activity. Interacts with tensin TNS3. Interacts (when phosphorylated) with tensin TNS4 (via SH2 domain); the interaction increases MET protein stability by inhibiting MET endocytosis and subsequent lysosomal degradation. Autophosphorylated in response to ligand binding on Tyr-1235 and Tyr-1236 in the kinase domain leading to further phosphorylation of Tyr-1350 and Tyr-1357 in the C-terminal multifunctional docking site. Dephosphorylated by PTPRJ at Tyr-1350 and Tyr-1366. Dephosphorylated by PTPN1 and PTPN2. Post-translationally, ubiquitinated. Ubiquitination by CBL regulates the receptor stability and activity through proteasomal degradation. In terms of processing, O-mannosylation of IPT/TIG domains by TMEM260 is required for protein maturation. O-mannosylated residues are composed of single mannose glycans that are not elongated or modified. Expressed at highest levels in lung, liver and kidney, also expressed in stomach, intestine, spleen, testis and brain. Not expressed in heart or muscle.

The protein localises to the membrane. It carries out the reaction L-tyrosyl-[protein] + ATP = O-phospho-L-tyrosyl-[protein] + ADP + H(+). Its activity is regulated as follows. In its inactive state, the C-terminal tail interacts with the catalytic domain and inhibits the kinase activity. Upon ligand binding, the C-terminal tail is displaced and becomes phosphorylated, thus increasing the kinase activity. Receptor tyrosine kinase that transduces signals from the extracellular matrix into the cytoplasm by binding to hepatocyte growth factor/HGF ligand. Regulates many physiological processes including proliferation, scattering, morphogenesis and survival. Ligand binding at the cell surface induces autophosphorylation of MET on its intracellular domain that provides docking sites for downstream signaling molecules. Following activation by ligand, interacts with the PI3-kinase subunit PIK3R1, PLCG1, SRC, GRB2, STAT3 or the adapter GAB1. Recruitment of these downstream effectors by MET leads to the activation of several signaling cascades including the RAS-ERK, PI3 kinase-AKT, or PLCgamma-PKC. The RAS-ERK activation is associated with the morphogenetic effects while PI3K/AKT coordinates prosurvival effects. During embryonic development, MET signaling plays a role in gastrulation, development and migration of muscles and neuronal precursors, angiogenesis and kidney formation. In adults, participates in wound healing as well as organ regeneration and tissue remodeling. Also promotes differentiation and proliferation of hematopoietic cells. The chain is Hepatocyte growth factor receptor (Met) from Rattus norvegicus (Rat).